The sequence spans 413 residues: Serine hydroxymethyltransferase (413 aa).

Residues L119 and 123–125 contribute to the (6S)-5,6,7,8-tetrahydrofolate site; that span reads GHL. K228 carries the N6-(pyridoxal phosphate)lysine modification. 351–353 contributes to the (6S)-5,6,7,8-tetrahydrofolate binding site; the sequence is SPF.

This sequence belongs to the SHMT family. Homodimer. Pyridoxal 5'-phosphate serves as cofactor.

Its subcellular location is the cytoplasm. The catalysed reaction is (6R)-5,10-methylene-5,6,7,8-tetrahydrofolate + glycine + H2O = (6S)-5,6,7,8-tetrahydrofolate + L-serine. It participates in one-carbon metabolism; tetrahydrofolate interconversion. Its pathway is amino-acid biosynthesis; glycine biosynthesis; glycine from L-serine: step 1/1. Its function is as follows. Catalyzes the reversible interconversion of serine and glycine with tetrahydrofolate (THF) serving as the one-carbon carrier. This reaction serves as the major source of one-carbon groups required for the biosynthesis of purines, thymidylate, methionine, and other important biomolecules. Also exhibits THF-independent aldolase activity toward beta-hydroxyamino acids, producing glycine and aldehydes, via a retro-aldol mechanism. This is Serine hydroxymethyltransferase from Clostridium botulinum (strain 657 / Type Ba4).